The following is a 479-amino-acid chain: Alpha,alpha-trehalose-phosphate synthase [UDP-forming] 2 (479 aa).

D-glucose 6-phosphate is bound by residues Tyr96 and Asp150. Positions 287 and 292 each coordinate UDP. Residues Arg287 and Lys292 each contribute to the UDP-alpha-D-glucose site. Arg325 serves as a coordination point for D-glucose 6-phosphate. UDP-binding positions include Ser363 to Val364 and Leu390 to Glu394. Asp386–Glu394 lines the UDP-alpha-D-glucose pocket.

Belongs to the glycosyltransferase 20 family.

The enzyme catalyses D-glucose 6-phosphate + UDP-alpha-D-glucose = alpha,alpha-trehalose 6-phosphate + UDP + H(+). It functions in the pathway carbohydrate biosynthesis. Its function is as follows. Synthase catalytic subunit of the trehalose synthase complex that catalyzes the production of trehalose from glucose-6-phosphate and UDP-alpha-D-glucose in a two step process. The disaccharide trehalose serves as a storage carbohydrate that is mobilized during conidial germination. Regulates the level of trehalose as a protectant for cell integrity during thermal and oxidative stress. The chain is Alpha,alpha-trehalose-phosphate synthase [UDP-forming] 2 from Aspergillus fumigatus (strain ATCC MYA-4609 / CBS 101355 / FGSC A1100 / Af293) (Neosartorya fumigata).